The primary structure comprises 279 residues: Undecaprenyl-diphosphatase (279 aa).

Transmembrane regions (helical) follow at residues 10–30 (FICF…FLPI), 48–68 (LGVS…IYYF), 96–116 (LFLY…LIKL), 128–148 (GLFS…LSEI), 203–223 (SFLV…FSLF), 229–249 (IDII…IFAI), and 259–279 (NNTL…LTTL).

It belongs to the UppP family.

It localises to the cell inner membrane. The catalysed reaction is di-trans,octa-cis-undecaprenyl diphosphate + H2O = di-trans,octa-cis-undecaprenyl phosphate + phosphate + H(+). In terms of biological role, catalyzes the dephosphorylation of undecaprenyl diphosphate (UPP). Confers resistance to bacitracin. This chain is Undecaprenyl-diphosphatase, found in Prochlorococcus marinus (strain NATL2A).